A 588-amino-acid chain; its full sequence is MFNIKNHLRLPIIGKREPEEQPDPIDHDLHVQRLRELLYGLDLMLDDDAQGVKSAFSDDTVESAVGRSGSAFYNAILGLEPKAIEEATEALYHAEQVTEERKKHFEHHDRPIGSYPAGMELQLCLSDIYLMQSALGFVSDSIVDSMKAAYRIRKTFLSFSKMMEHVRDVQHKKETGEIKSLSPNATFIDEFIESGVITGYGVLTFLVSMFPPSLSRILSLFSFHGVRKESLELLWRASKYPNIQGAIALLCLYAFNAMIQSLGSIPPSNYDQELEHCLQAVKDIRKRYSKGALWAVMEAKIYFLTGESQMALEMEELSIDSSMEQIIAMKGFDTAMLYVGMRKFKQAADAIIELEDLNSWSHAFYRYFAGCCLLQHGKEILGSGGSEEEAKASIDHGIEYLKNAPTLVQKKKKRRTLPVEAYLIRKVQKWEDRAEKLNISIADAMDVPPYAELIYIFVICSLKDPKEAEALRADLETCKCSEEDEAGLKEFLLGVIDRHLKEYDSCRVRMEHVLQLDQGYLSRDNRELWILPFAYYELAALYWDMHGMAAEKEVNHYLKKAQEFNDYDLQNRLSMLAQAATQTLQSEK.

This is an uncharacterized protein from Schizosaccharomyces pombe (strain 972 / ATCC 24843) (Fission yeast).